A 163-amino-acid chain; its full sequence is Nucleotide-binding protein Cla_1551 (163 aa).

It belongs to the YajQ family.

In terms of biological role, nucleotide-binding protein. This Campylobacter lari (strain RM2100 / D67 / ATCC BAA-1060) protein is Nucleotide-binding protein Cla_1551.